Consider the following 181-residue polypeptide: Secreted chorismate mutase (181 aa).

The signal sequence occupies residues 1-20; that stretch reads MLASVALAALAGVGTPHATA. Positions 21–100 constitute a Chorismate mutase domain; sequence DDASPLVPLV…ATSSVEHTRF (80 aa). Residues R36, K47, D56, 59–63, 92–96, and R121 each bind substrate; these read REQQV and TSSVE. An intrachain disulfide couples C147 to C180.

In terms of assembly, homodimer.

Its subcellular location is the secreted. It catalyses the reaction chorismate = prephenate. Its pathway is metabolic intermediate biosynthesis; prephenate biosynthesis; prephenate from chorismate: step 1/1. Functionally, catalyzes the Claisen rearrangement of chorismate to prephenate. May play some role in the pathogenicity. The protein is Secreted chorismate mutase of Mycolicibacterium smegmatis (strain ATCC 700084 / mc(2)155) (Mycobacterium smegmatis).